A 346-amino-acid chain; its full sequence is MAEITAKLVKELREKSGAGVMDAKKALVETDGDMDKAVELLREKGMAKAAKKADRVAAEGLTGVYVHGNVAAVVEVNAETDFVAKNAQFVELVNATAKVIAEGKPANNDEALALVMPSGETLAEAYVNATATIGEKISFRRFALIEKTDEQHFGAYQHNGGRIGVISVVEGGDDALAKQVSMHIAAMKPTVLSYTELDAQFIKDELAQLNHAIELDNESRAMVDKPALPFLKYGSKAQLSDDVITAAEADIKAELAAEGKPEKIWDKIIPGKMDRFMLDNTKVDQAYTLLAQVYIMDDSKTVEAYLDSVNAKAIAFARFEVGEGIEKKANDFESEVAATMAAALNN.

The tract at residues 80 to 83 (TDFV) is involved in Mg(2+) ion dislocation from EF-Tu.

It belongs to the EF-Ts family.

The protein localises to the cytoplasm. Associates with the EF-Tu.GDP complex and induces the exchange of GDP to GTP. It remains bound to the aminoacyl-tRNA.EF-Tu.GTP complex up to the GTP hydrolysis stage on the ribosome. The protein is Elongation factor Ts of Streptococcus pyogenes serotype M3 (strain ATCC BAA-595 / MGAS315).